The sequence spans 356 residues: MQTLHALLRDIPAPDAEAMARAQQHIDGLLKPPGSLGRLETLAVQLAGMPGLNGTPQVGEKAVLVMCADHGVWDEGVAVSPKIVTAIQAANMTRGTTGVCVLAAQAGAKVYVIDVGIDAEPIPGVVDMRVARGCGNIAVGPAMSRSQAEALLLEVSRYTCDLAQRGVTLFGVGELGMANTTPAAAMVSVFTGSDAKEVVGIGANLPPSRIDNKVDVVRRAIAINQPNPRDGIDVLSKVGGFDLVGMTGVILGAARCGLPVLLDGFLSYSAALAACQIAPAVRPYLIPSHFSAEKGARIALAHLSMEPYLHMAMRLGEGSGAALAMPIVEAACAMFHNMGELAASNIVLPEGNANAT.

The active-site Proton acceptor is the E317.

The protein belongs to the CobT family. As to quaternary structure, homodimer.

It carries out the reaction 5,6-dimethylbenzimidazole + nicotinate beta-D-ribonucleotide = alpha-ribazole 5'-phosphate + nicotinate + H(+). The protein operates within nucleoside biosynthesis; alpha-ribazole biosynthesis; alpha-ribazole from 5,6-dimethylbenzimidazole: step 1/2. Catalyzes the synthesis of alpha-ribazole-5'-phosphate from nicotinate mononucleotide (NAMN) and 5,6-dimethylbenzimidazole (DMB). This Salmonella agona (strain SL483) protein is Nicotinate-nucleotide--dimethylbenzimidazole phosphoribosyltransferase.